The primary structure comprises 225 residues: Lipoprotein CseA (225 aa).

The signal sequence occupies residues 1–36 (MRGLTDGRTPRGTRRTTQAASTAVAVFVALGVSLAG). Cys-37 is lipidated: N-palmitoyl cysteine. Cys-37 carries S-diacylglycerol cysteine lipidation. Disordered regions lie at residues 40–77 (GGTG…APDR) and 205–225 (THND…EPDS). Low complexity predominate over residues 60–73 (SASPAPAAKASPSK).

Its subcellular location is the cell membrane. In terms of biological role, may be involved in the stabilization of the cell envelope or may interact with the sensor protein CseC to modulate its activity, in response to cell envelope stress. This Streptomyces coelicolor (strain ATCC BAA-471 / A3(2) / M145) protein is Lipoprotein CseA (cseA).